A 371-amino-acid polypeptide reads, in one-letter code: Probable protein phosphatase 2C 11 (371 aa).

The chain crosses the membrane as a helical span at residues 29–49 (FFFFLFNSQTISSFIIFYLFL). The segment at 67 to 95 (PPLSVAPLRGDANSPPPESSSSPATKSSL) is disordered. Residues 85-94 (SSSSPATKSS) show a composition bias toward low complexity. In terms of domain architecture, PPM-type phosphatase spans 123-368 (SYGYSSLKGK…DNITCIVVRF (246 aa)). Residues Asp159, Gly160, Asp320, and Asp359 each contribute to the Mn(2+) site.

Belongs to the PP2C family. The cofactor is Mg(2+). Mn(2+) serves as cofactor.

The protein resides in the membrane. The enzyme catalyses O-phospho-L-seryl-[protein] + H2O = L-seryl-[protein] + phosphate. The catalysed reaction is O-phospho-L-threonyl-[protein] + H2O = L-threonyl-[protein] + phosphate. The chain is Probable protein phosphatase 2C 11 from Arabidopsis thaliana (Mouse-ear cress).